Reading from the N-terminus, the 138-residue chain is Centromere protein S (138 aa).

N-acetylmethionine is present on Met-1. The tract at residues 110-138 (RKAQKKKKSEDGSKNSRQPAEAGVVESEN) is disordered.

The protein belongs to the TAF9 family. CENP-S/MHF1 subfamily. Heterodimer with CENPX, sometimes called MHF; this interaction stabilizes both partners. MHF heterodimers can assemble to form tetrameric structures. MHF also coassemble with CENPT-CENPW heterodimers at centromeres to form the tetrameric CENP-T-W-S-X complex. Forms a discrete complex with FANCM and CENPX, called FANCM-MHF; this interaction, probably mediated by direct binding between CENPS and FANCM, leads to synergistic activation of double-stranded DNA binding and strongly stimulates FANCM-mediated DNA remodeling. Recruited by FANCM to the Fanconi anemia (FA) core complex, which consists of CENPS, CENPX, FANCA, FANCB, FANCC, FANCE, FANCF, FANCG, FANCL, FANCM, FAAP24 and FAAP100. The FA core complex associates with Bloom syndrome (BLM) complex, which consists of at least BLM, DNA topoisomerase 3-alpha (TOP3A), RMI1/BLAP75, RPA1/RPA70 and RPA2/RPA32. The super complex between FA and BLM is called BRAFT. Component of the CENPA-CAD complex, composed of CENPI, CENPK, CENPL, CENPO, CENPP, CENPQ, CENPR and CENPS. The CENPA-CAD complex is probably recruited on centromeres by the CENPA-NAC complex, composed of at least CENPA, CENPC, CENPH, CENPM, CENPN, CENPT and CENPU. As to expression, ubiquitously expressed.

It is found in the nucleus. Its subcellular location is the chromosome. The protein resides in the centromere. It localises to the kinetochore. Functionally, DNA-binding component of the Fanconi anemia (FA) core complex. Required for the normal activation of the FA pathway, leading to monoubiquitination of the FANCI-FANCD2 complex in response to DNA damage, cellular resistance to DNA cross-linking drugs, and prevention of chromosomal breakage. In complex with CENPX (MHF heterodimer), crucial cofactor for FANCM in both binding and ATP-dependent remodeling of DNA. Stabilizes FANCM. In complex with CENPX and FANCM (but not other FANC proteins), rapidly recruited to blocked forks and promotes gene conversion at blocked replication forks. In complex with CENPT, CENPW and CENPX (CENP-T-W-S-X heterotetramer), involved in the formation of a functional kinetochore outer plate, which is essential for kinetochore-microtubule attachment and faithful mitotic progression. As a component of MHF and CENP-T-W-S-X complexes, binds DNA and bends it to form a nucleosome-like structure. DNA-binding function is fulfilled in the presence of CENPX, with the following preference for DNA substates: Holliday junction &gt; double-stranded &gt; splay arm &gt; single-stranded. Does not bind DNA on its own. In Homo sapiens (Human), this protein is Centromere protein S (CENPS).